Reading from the N-terminus, the 1096-residue chain is Centrosome-associated zinc finger protein Cp190 (1096 aa).

The segment at 1-209 (MGEVKSVKVD…GDSSNVKQEP (209 aa)) is involved in microtubule and centrosome binding. The region spanning 30–97 (CDLTLQFRDN…MYTGTLEFEL (68 aa)) is the BTB domain. Positions 126-308 (MENVNRQQRP…PQGTQTQLEH (183 aa)) are disordered. Polar residues-rich tracts occupy residues 175-213 (RANT…TSPF) and 220-230 (YNNNKRPAQTS). 2 positions are modified to phosphoserine: S197 and S211. The segment at 207–271 (QEPTSPFEQL…GDNDPEYDGG (65 aa)) is nuclear localization. Residues 210-245 (TSPFEQLRKGYNNNKRPAQTSLLSPPSKKPSLEEVK) are involved in interaction with cliff. T229 carries the post-translational modification Phosphothreonine. Phosphoserine is present on S233. A compositionally biased stretch (basic and acidic residues) spans 239–252 (PSLEEVKEFAEQQR). Residues 245–468 (KEFAEQQRMR…IAQGAENTTG (224 aa)) are centrosomal targeting M domain involved in interaction with ZIPIC. The segment covering 292–305 (STSKQQSPQGTQTQ) has biased composition (low complexity). Phosphoserine is present on residues S298 and S319. The interval 309–390 (GSTTIILKQD…KPPANQSSAT (82 aa)) is involved in interaction with cliff. A disordered region spans residues 366-449 (NTPAAPTEKS…ANTAAAQKRR (84 aa)). The centrosomal localization and interaction with microtubules stretch occupies residues 385-508 (NQSSATTSPH…KETIDPALCE (124 aa)). The segment covering 412-445 (AQQKAASSQQKSGTSQTTGNQGTGANPPANTAAA) has biased composition (low complexity). 2 consecutive C2H2-type zinc fingers follow at residues 538–561 (AECA…NEVH) and 567–590 (QQCI…KSYH). T603 carries the phosphothreonine modification. The segment covering 608–625 (LGSQDEEEEAEGDEEQEP) has biased composition (acidic residues). Residues 608–630 (LGSQDEEEEAEGDEEQEPEQTGK) form a disordered region. Phosphoserine occurs at positions 610, 708, and 723. The disordered stretch occupies residues 710 to 733 (PEAEHVKQETDEKSLAGTEEEYDD). A compositionally biased stretch (basic and acidic residues) spans 711 to 723 (EAEHVKQETDEKS). T727 carries the post-translational modification Phosphothreonine. Phosphoserine occurs at positions 745, 748, 757, and 760. Residues 770-927 (LIAESEEQSN…EDSPIPHSDS (158 aa)) form a disordered region. Basic and acidic residues predominate over residues 777 to 799 (QSNKEPKSDKPRDDISEKLKELT). Residues 802–812 (WTEDENDDDVD) are compositionally biased toward acidic residues. Phosphothreonine is present on T817. 4 stretches are compositionally biased toward basic and acidic residues: residues 825–834 (ANKDPEPTVH), 849–861 (KGPE…KASE), 882–907 (EKMD…KEAE), and 914–927 (EFIK…HSDS). 3 positions are modified to phosphoserine: S920, S925, and S927. T936 carries the post-translational modification Phosphothreonine. Residue S938 is modified to Phosphoserine. Composition is skewed to basic and acidic residues over residues 960-973 (IAEA…KDIV) and 1011-1035 (AAEK…EDKP). The tract at residues 960-1096 (IAEAEKPDQE…GVSAAAKEEL (137 aa)) is disordered. Phosphoserine occurs at positions 1071 and 1074. Positions 1076–1086 (WGDDDEDEDEN) are enriched in acidic residues.

As to quaternary structure, homodimerizes via the N-terminal BTB domain. Component of the gypsy chromatin insulator complex, composed of Cp190, mod(mdg4) and su(Hw). The gypsy chromatin insulator complex interacts with Topors via mod(mdg4) and su(Hw). Interacts with Cp60. Interacts with inv. Interacts with Nup98. Interacts (via BTB domain) with pita (via region between the ZAD domain and the first zinc finger domain); the interaction is direct. Interacts with ZIPIC (via region between the ZAD domain and the first zinc finger domain); the interaction is direct. Interacts (via regions between the BTB domain and first zinc finger domain) with cliff (via regions flanking MADF domain 1); the interaction is probably direct. Associates (via N-terminus) with microtubules; the interaction is direct, is enhanced by dimerization and involves multiple regions within the N-terminus. Microtubule association is enriched at growing plus ends. As to expression, expressed in spermatids but not in mature spermatozoa. Localizes within the spermatids to a sheath of microtubules around the nucleus and to microtubules within the tail.

Its subcellular location is the nucleus. The protein resides in the cytoplasm. The protein localises to the cytoskeleton. It is found in the microtubule organizing center. It localises to the centrosome. Its subcellular location is the chromosome. The protein resides in the nucleoplasm. Functionally, plays a central role in chromatin domain organization and boundary function through recruitment by a range of insulator DNA-binding proteins, including ZIPIC, pita, CTCF, su(Hw), cliff and others. Together with pita and CTCF cooperatively binds to and regulates the activity of the Miscadastral pigmentation (MCP) insulator. Cooperatively recruited to the front-ultraabdominal (Fub) boundary by pita, su(Hw) and cliff. Recruitment of Cp190 together with Chro/chromator induces chromatin decondensation. Component of the gypsy chromatin insulator complex which is required for the function of the gypsy chromatin insulator and other endogenous chromatin insulators. Chromatin insulators are regulatory elements that establish independent domains of transcriptional activity within eukaryotic genomes. Insulators have two defining properties; they can block the communication between an enhancer and a promoter when placed between them and can also buffer transgenes from position effect variegation (PEV). Insulators are proposed to structure the chromatin fiber into independent domains of differing transcriptional potential by promoting the formation of distinct chromatin loops to form topologically associating domains (TADs). This chromatin looping may involve the formation of insulator bodies, where homotypic interactions between individual subunits of the insulator complex could promote the clustering of widely spaced insulators at the nuclear periphery. Within the gypsy insulator complex, this protein may directly bind to insulator DNA at sites distinct from those recognized by su(Hw). Required during embryogenesis for axial expansion, an actin/myosin dependent process that distributes the dividing nuclei along the anterior-posterior axis of the syncytial embryo. Associates with centrosomes and interphase microtubules during mitosis, and recruits CP60; may have a role in maintaining centrosome and spindle integrity. In Drosophila melanogaster (Fruit fly), this protein is Centrosome-associated zinc finger protein Cp190.